Here is a 312-residue protein sequence, read N- to C-terminus: Transcription initiation factor IIB-2 (312 aa).

A TFIIB-type zinc finger spans residues 2–34; that stretch reads SDAFCSDCKRHTEVVFDHSAGDTVCSECGLVLE. Residues Cys6, Cys9, Cys26, and Cys29 each coordinate Zn(2+). Tandem repeats lie at residues 115 to 192 and 216 to 290.

The protein belongs to the TFIIB family. In terms of assembly, associates with TFIID-IIA (DA complex) to form TFIID-IIA-IIB (DAB-complex) which is then recognized by polymerase II.

The protein localises to the nucleus. Its function is as follows. General factor that plays a major role in the activation of eukaryotic genes transcribed by RNA polymerase II. The protein is Transcription initiation factor IIB-2 (TFIIB2) of Arabidopsis thaliana (Mouse-ear cress).